We begin with the raw amino-acid sequence, 140 residues long: Secreted RxLR effector protein 37 (140 aa).

The signal sequence occupies residues 1 to 22; the sequence is MTYRLPFVAVILFVTAKHVVLA. A RxLR-dEER motif is present at residues 57–76; sequence RFLRQLEKKPGVNDKRDEER.

Belongs to the RxLR effector family.

Its subcellular location is the secreted. The protein resides in the host nucleus. It is found in the host cytoplasm. Functionally, secreted effector that completely suppresses the host cell death induced by cell death-inducing proteins. The polypeptide is Secreted RxLR effector protein 37 (Plasmopara viticola (Downy mildew of grapevine)).